Consider the following 221-residue polypeptide: U1 small nuclear ribonucleoprotein C (221 aa).

The segment at 4-36 (YFCDYCDTYLTHDSPSVRKTHCNGRKHKENVRV) adopts a Matrin-type zinc-finger fold. Residues 100–168 (SNPFPTSQAG…PPGAPTLPQP (69 aa)) form a disordered region. A compositionally biased stretch (pro residues) spans 134–166 (APAPPRMPGPLLMTPPPGAAAPGMAPPGAPTLP).

This sequence belongs to the U1 small nuclear ribonucleoprotein C family. U1 snRNP is composed of the 7 core Sm proteins B/B', D1, D2, D3, E, F and G that assemble in a heptameric protein ring on the Sm site of the small nuclear RNA to form the core snRNP, and at least 3 U1 snRNP-specific proteins U1-70K, U1-A and U1-C. U1-C interacts with U1 snRNA and the 5' splice-site region of the pre-mRNA.

The protein resides in the nucleus. Functionally, component of the spliceosomal U1 snRNP, which is essential for recognition of the pre-mRNA 5' splice-site and the subsequent assembly of the spliceosome. U1-C is directly involved in initial 5' splice-site recognition for both constitutive and regulated alternative splicing. The interaction with the 5' splice-site seems to precede base-pairing between the pre-mRNA and the U1 snRNA. Stimulates commitment or early (E) complex formation by stabilizing the base pairing of the 5' end of the U1 snRNA and the 5' splice-site region. The polypeptide is U1 small nuclear ribonucleoprotein C (Branchiostoma floridae (Florida lancelet)).